The primary structure comprises 389 residues: Probable dual-specificity RNA methyltransferase RlmN (389 aa).

Residues 1 to 23 (MTTQHPDTPETGITPGGTSGAFR) form a disordered region. The active-site Proton acceptor is Glu-127. Residues 133-376 (YPTRTTLCIS…ATLRDTRGQD (244 aa)) form the Radical SAM core domain. A disulfide bridge links Cys-140 with Cys-381. [4Fe-4S] cluster-binding residues include Cys-147, Cys-151, and Cys-154. S-adenosyl-L-methionine contacts are provided by residues 202-203 (GE), Ser-236, 259-261 (SLH), and Asn-338. The S-methylcysteine intermediate role is filled by Cys-381.

This sequence belongs to the radical SAM superfamily. RlmN family. It depends on [4Fe-4S] cluster as a cofactor.

Its subcellular location is the cytoplasm. It carries out the reaction adenosine(2503) in 23S rRNA + 2 reduced [2Fe-2S]-[ferredoxin] + 2 S-adenosyl-L-methionine = 2-methyladenosine(2503) in 23S rRNA + 5'-deoxyadenosine + L-methionine + 2 oxidized [2Fe-2S]-[ferredoxin] + S-adenosyl-L-homocysteine. It catalyses the reaction adenosine(37) in tRNA + 2 reduced [2Fe-2S]-[ferredoxin] + 2 S-adenosyl-L-methionine = 2-methyladenosine(37) in tRNA + 5'-deoxyadenosine + L-methionine + 2 oxidized [2Fe-2S]-[ferredoxin] + S-adenosyl-L-homocysteine. Functionally, specifically methylates position 2 of adenine 2503 in 23S rRNA and position 2 of adenine 37 in tRNAs. The polypeptide is Probable dual-specificity RNA methyltransferase RlmN (Bifidobacterium longum (strain NCC 2705)).